The primary structure comprises 406 residues: Argininosuccinate synthase (406 aa).

Residue 9 to 17 participates in ATP binding; the sequence is AYSGGLDTS. Position 86 (tyrosine 86) interacts with L-citrulline. Residue glycine 116 participates in ATP binding. Residues threonine 118, asparagine 122, and aspartate 123 each coordinate L-aspartate. Asparagine 122 provides a ligand contact to L-citrulline. L-citrulline contacts are provided by arginine 126, serine 174, serine 183, glutamate 259, and tyrosine 271.

The protein belongs to the argininosuccinate synthase family. Type 1 subfamily. As to quaternary structure, homotetramer.

Its subcellular location is the cytoplasm. The enzyme catalyses L-citrulline + L-aspartate + ATP = 2-(N(omega)-L-arginino)succinate + AMP + diphosphate + H(+). It participates in amino-acid biosynthesis; L-arginine biosynthesis; L-arginine from L-ornithine and carbamoyl phosphate: step 2/3. The sequence is that of Argininosuccinate synthase from Geobacillus kaustophilus (strain HTA426).